We begin with the raw amino-acid sequence, 70 residues long: NAD(P)H-quinone oxidoreductase subunit L (70 aa).

A run of 2 helical transmembrane segments spans residues 2–22 (IVALLYLILAGAYLLVIPIAV) and 39–59 (LLMYFLVFFFFPGLLVLSPFA).

The protein belongs to the complex I NdhL subunit family. NDH-1 can be composed of about 15 different subunits; different subcomplexes with different compositions have been identified which probably have different functions.

It is found in the cellular thylakoid membrane. The catalysed reaction is a plastoquinone + NADH + (n+1) H(+)(in) = a plastoquinol + NAD(+) + n H(+)(out). The enzyme catalyses a plastoquinone + NADPH + (n+1) H(+)(in) = a plastoquinol + NADP(+) + n H(+)(out). In terms of biological role, NDH-1 shuttles electrons from an unknown electron donor, via FMN and iron-sulfur (Fe-S) centers, to quinones in the respiratory and/or the photosynthetic chain. The immediate electron acceptor for the enzyme in this species is believed to be plastoquinone. Couples the redox reaction to proton translocation, and thus conserves the redox energy in a proton gradient. Cyanobacterial NDH-1 also plays a role in inorganic carbon-concentration. In Nostoc punctiforme (strain ATCC 29133 / PCC 73102), this protein is NAD(P)H-quinone oxidoreductase subunit L.